Reading from the N-terminus, the 206-residue chain is Ephrin-A4 (206 aa).

The N-terminal stretch at 1–25 (MRLLPLLRTVLWAALLGSRLPGCSS) is a signal peptide. Residues 26-158 (LRHPIYWNSS…RLQVSVCCKE (133 aa)) form the Ephrin RBD domain. Asn33 carries N-linked (GlcNAc...) asparagine glycosylation. The Cell attachment site signature appears at 41–43 (RGD). 2 disulfides stabilise this stretch: Cys58-Cys99 and Cys86-Cys147. Asn98 carries an N-linked (GlcNAc...) asparagine glycan. The tract at residues 161–180 (SSHESAHPVGSPGESGTSGW) is disordered. Ser175 is lipidated: GPI-anchor amidated serine. The propeptide at 176–206 (GTSGWRGGHAPSPLCLLLLLLLPILRLLRVL) is removed in mature form.

Belongs to the ephrin family. In terms of tissue distribution, expressed in myogenic progenitor cells.

It localises to the cell membrane. Functionally, cell surface GPI-bound ligand for Eph receptors, a family of receptor tyrosine kinases which are crucial for migration, repulsion and adhesion during neuronal, vascular and epithelial development. Binds promiscuously Eph receptors residing on adjacent cells, leading to contact-dependent bidirectional signaling into neighboring cells. May play a role in the interaction between activated B-lymphocytes and dendritic cells in tonsils. The protein is Ephrin-A4 (Efna4) of Mus musculus (Mouse).